The primary structure comprises 624 residues: Pentatricopeptide repeat-containing protein At2g32630 (624 aa).

PPR repeat units lie at residues 153–187, 188–222, 223–257, 258–292, 293–327, 328–362, 363–397, 398–432, 433–467, 468–502, 503–537, 538–572, and 573–607; these read FEKFFDLVFRVYVDNGMFEEGLRVFDYMVKKGLSI, DERSCIVFLVAAKKRRRIDLCLEIFRRMVDSGVKI, TVYSLTIVVEGLCRRGEVEKSKKLIKEFSVKGIKP, EAYTYNTIINAYVKQRDFSGVEGVLKVMKKDGVVY, NKVTYTLLMELSVKNGKMSDAEKLFDEMRERGIES, DVHVYTSLISWNCRKGNMKRAFLLFDELTEKGLSP, SSYTYGALIDGVCKVGEMGAAEILMNEMQSKGVNI, TQVVFNTLIDGYCRKGMVDEASMIYDVMEQKGFQA, DVFTCNTIASCFNRLKRYDEAKQWLFRMMEGGVKL, STVSYTNLIDVYCKEGNVEEAKRLFVEMSSKGVQP, NAITYNVMIYAYCKQGKIKEARKLRANMEANGMDP, DSYTYTSLIHGECIADNVDEAMRLFSEMGLKGLDQ, and NSVTYTVMISGLSKAGKSDEAFGLYDEMKRKGYTI.

Belongs to the PPR family. P subfamily.

This is Pentatricopeptide repeat-containing protein At2g32630 from Arabidopsis thaliana (Mouse-ear cress).